We begin with the raw amino-acid sequence, 577 residues long: Isocitrate dehydrogenase kinase/phosphatase (577 aa).

ATP-binding positions include 318–324 (APGVRGM) and lysine 339. Aspartate 374 is an active-site residue.

The protein belongs to the AceK family.

The protein resides in the cytoplasm. It catalyses the reaction L-seryl-[isocitrate dehydrogenase] + ATP = O-phospho-L-seryl-[isocitrate dehydrogenase] + ADP + H(+). Its function is as follows. Bifunctional enzyme which can phosphorylate or dephosphorylate isocitrate dehydrogenase (IDH) on a specific serine residue. This is a regulatory mechanism which enables bacteria to bypass the Krebs cycle via the glyoxylate shunt in response to the source of carbon. When bacteria are grown on glucose, IDH is fully active and unphosphorylated, but when grown on acetate or ethanol, the activity of IDH declines drastically concomitant with its phosphorylation. The polypeptide is Isocitrate dehydrogenase kinase/phosphatase (Pseudomonas aeruginosa (strain UCBPP-PA14)).